The chain runs to 167 residues: Interferon gamma (167 aa).

An N-terminal signal peptide occupies residues 1–23 (MNYTGYLLAFQLCIILGSSSCYC). Position 24 is a pyrrolidone carboxylic acid (Gln24). N-linked (GlcNAc...) asparagine glycans are attached at residues Asn39 and Asn105. Residues 148 to 167 (SNLRKRKRSQSTFHGRRASI) form a disordered region. Basic residues predominate over residues 149-167 (NLRKRKRSQSTFHGRRASI).

Belongs to the type II (or gamma) interferon family. In terms of assembly, homodimer. Interacts with IFNGR1 (via extracellular domain); this interaction promotes IFNGR1 dimerization. In terms of tissue distribution, released primarily from activated T lymphocytes.

The protein localises to the secreted. Functionally, type II interferon produced by immune cells such as T-cells and NK cells that plays crucial roles in antimicrobial, antiviral, and antitumor responses by activating effector immune cells and enhancing antigen presentation. Primarily signals through the JAK-STAT pathway after interaction with its receptor IFNGR1 to affect gene regulation. Upon IFNG binding, IFNGR1 intracellular domain opens out to allow association of downstream signaling components JAK2, JAK1 and STAT1, leading to STAT1 activation, nuclear translocation and transcription of IFNG-regulated genes. Many of the induced genes are transcription factors such as IRF1 that are able to further drive regulation of a next wave of transcription. Plays a role in class I antigen presentation pathway by inducing a replacement of catalytic proteasome subunits with immunoproteasome subunits. In turn, increases the quantity, quality, and repertoire of peptides for class I MHC loading. Increases the efficiency of peptide generation also by inducing the expression of activator PA28 that associates with the proteasome and alters its proteolytic cleavage preference. Up-regulates as well MHC II complexes on the cell surface by promoting expression of several key molecules such as cathepsins B/CTSB, H/CTSH, and L/CTSL. Participates in the regulation of hematopoietic stem cells during development and under homeostatic conditions by affecting their development, quiescence, and differentiation. This chain is Interferon gamma (IFNG), found in Dasypus novemcinctus (Nine-banded armadillo).